The chain runs to 290 residues: Transcription cofactor vestigial-like protein 4 (290 aa).

At M1 the chain carries N-acetylmethionine. The segment covering 17-30 (ADDEKREAALRGEP) has biased composition (basic and acidic residues). Disordered regions lie at residues 17-65 (ADDE…PGDE), 85-106 (LNKT…SPIE), 140-161 (LDAS…QQNR), and 254-290 (AAKD…SVVS). Position 52 is a phosphoserine (S52). Residues 92–105 (DCRRDPRERSRSPI) show a composition bias toward basic and acidic residues. Phosphoserine is present on S149. Polar residues predominate over residues 150–161 (PTLTPGERQQNR). T153 is modified (phosphothreonine). A compositionally biased stretch (low complexity) spans 272–290 (PASPSAHMVSHSHSPSVVS). A Phosphoserine modification is found at S274.

The protein belongs to the vestigial family. As to quaternary structure, interacts with TEFs. Interacts with IRF2BP2.

It is found in the nucleus. Its function is as follows. May act as a specific coactivator for the mammalian TEFs. This Homo sapiens (Human) protein is Transcription cofactor vestigial-like protein 4.